The following is a 697-amino-acid chain: Ribosomal RNA large subunit methyltransferase K/L (697 aa).

The 112-residue stretch at 43–154 (ILYNSLMWSR…QNLVHIMLDL (112 aa)) folds into the THUMP domain.

It belongs to the methyltransferase superfamily. RlmKL family.

The protein resides in the cytoplasm. It catalyses the reaction guanosine(2445) in 23S rRNA + S-adenosyl-L-methionine = N(2)-methylguanosine(2445) in 23S rRNA + S-adenosyl-L-homocysteine + H(+). The catalysed reaction is guanosine(2069) in 23S rRNA + S-adenosyl-L-methionine = N(2)-methylguanosine(2069) in 23S rRNA + S-adenosyl-L-homocysteine + H(+). Specifically methylates the guanine in position 2445 (m2G2445) and the guanine in position 2069 (m7G2069) of 23S rRNA. The polypeptide is Ribosomal RNA large subunit methyltransferase K/L (Buchnera aphidicola subsp. Schizaphis graminum (strain Sg)).